The primary structure comprises 489 residues: Glycogen synthase (489 aa).

Residue Lys18 coordinates ADP-alpha-D-glucose.

The protein belongs to the glycosyltransferase 1 family. Bacterial/plant glycogen synthase subfamily.

The catalysed reaction is [(1-&gt;4)-alpha-D-glucosyl](n) + ADP-alpha-D-glucose = [(1-&gt;4)-alpha-D-glucosyl](n+1) + ADP + H(+). The protein operates within glycan biosynthesis; glycogen biosynthesis. Synthesizes alpha-1,4-glucan chains using ADP-glucose. The polypeptide is Glycogen synthase (Rhodopseudomonas palustris (strain BisB18)).